The primary structure comprises 915 residues: Metabotropic glutamate receptor 7 (915 aa).

Positions 1–34 (MVQLRKLLRVLTLMKFPCCVLEVLLCALAAAARG) are cleaved as a signal peptide. The Extracellular portion of the chain corresponds to 35–590 (QEMYAPHSIR…IIKLEWHSPW (556 aa)). C67 and C109 form a disulfide bridge. N-linked (GlcNAc...) asparagine glycosylation is present at N98. Residues S159, 180-182 (AST), Y230, and D314 contribute to the L-glutamate site. 7 disulfide bridges follow: C249–C541, C374–C390, C430–C437, C523–C542, C527–C545, C548–C560, and C563–C576. K407 provides a ligand contact to L-glutamate. Residues N458 and N486 are each glycosylated (N-linked (GlcNAc...) asparagine). N-linked (GlcNAc...) asparagine glycosylation is present at N572. Residues 591-615 (AVIPVFLAMLGIIATIFVMATFIRY) traverse the membrane as a helical segment. Topologically, residues 616-627 (NDTPIVRASGRE) are cytoplasmic. The chain crosses the membrane as a helical span at residues 628-648 (LSYVLLTGIFLCYIITFLMIA). Residues 649–654 (KPDVAV) are Extracellular-facing. The helical transmembrane segment at 655-675 (CSFRRVFLGLGMCISYAALLT) threads the bilayer. The Cytoplasmic portion of the chain corresponds to 676-702 (KTNRIYRIFEQGKKSVTAPRLISPTSQ). Residues 703 to 723 (LAITSSLISVQLLGVFIWFGV) traverse the membrane as a helical segment. Topologically, residues 724–753 (DPPNIIIDYDEHKTMNPEQARGVLKCDITD) are extracellular. The helical transmembrane segment at 754–775 (LQIICSLGYSILLMVTCTVYAI) threads the bilayer. At 776 to 788 (KTRGVPENFNEAK) the chain is on the cytoplasmic side. The chain crosses the membrane as a helical span at residues 789–810 (PIGFTMYTTCIVWLAFIPIFFG). Topologically, residues 811–825 (TAQSAEKLYIQTTTL) are extracellular. The helical transmembrane segment at 826–850 (TISMNLSASVALGMLYMPKVYIIIF) threads the bilayer. At 851 to 915 (HPELNVQKRK…KYVSYNNLVI (65 aa)) the chain is on the cytoplasmic side. Residues 874-895 (SRLSHKPSDRPNGEAKTELCEN) form a disordered region. Over residues 879–892 (KPSDRPNGEAKTEL) the composition is skewed to basic and acidic residues. The residue at position 900 (S900) is a Phosphoserine.

Belongs to the G-protein coupled receptor 3 family. As to quaternary structure, homodimer. Interacts with PICK1. In terms of processing, N-glycosylated. Expressed in many areas of the brain, especially in the cerebral cortex, hippocampus, and cerebellum. Expression of GRM7 isoforms in non-neuronal tissues appears to be restricted to isoform 3 and isoform 4.

The protein localises to the cell membrane. G-protein coupled receptor activated by glutamate that regulates axon outgrowth through the MAPK-cAMP-PKA signaling pathway during neuronal development. Ligand binding causes a conformation change that triggers signaling via guanine nucleotide-binding proteins (G proteins) and modulates the activity of downstream effectors, such as adenylate cyclase that it inhibits. This chain is Metabotropic glutamate receptor 7 (GRM7), found in Homo sapiens (Human).